The primary structure comprises 293 residues: Bifunctional protein FolD (293 aa).

NADP(+) is bound by residues 166–168 (GRS), S191, and I232.

Belongs to the tetrahydrofolate dehydrogenase/cyclohydrolase family. Homodimer.

It carries out the reaction (6R)-5,10-methylene-5,6,7,8-tetrahydrofolate + NADP(+) = (6R)-5,10-methenyltetrahydrofolate + NADPH. The catalysed reaction is (6R)-5,10-methenyltetrahydrofolate + H2O = (6R)-10-formyltetrahydrofolate + H(+). It participates in one-carbon metabolism; tetrahydrofolate interconversion. In terms of biological role, catalyzes the oxidation of 5,10-methylenetetrahydrofolate to 5,10-methenyltetrahydrofolate and then the hydrolysis of 5,10-methenyltetrahydrofolate to 10-formyltetrahydrofolate. This is Bifunctional protein FolD from Synechococcus sp. (strain JA-2-3B'a(2-13)) (Cyanobacteria bacterium Yellowstone B-Prime).